The primary structure comprises 291 residues: Omega-amidase NIT3 (291 aa).

The 254-residue stretch at 11–264 (IKVALVQLSG…EEIIYAELDP (254 aa)) folds into the CN hydrolase domain. A Phosphothreonine modification is found at threonine 34. Glutamate 53 functions as the Proton acceptor in the catalytic mechanism. The Proton donor role is filled by lysine 128. Cysteine 169 serves as the catalytic Nucleophile.

Belongs to the carbon-nitrogen hydrolase superfamily. NIT1/NIT2 family. In terms of assembly, homodimer.

It catalyses the reaction a monoamide of a dicarboxylate + H2O = a dicarboxylate + NH4(+). Its function is as follows. Possesses omega-amidase activity. The role of omega-amidase is to remove potentially toxic intermediates by converting 2-oxoglutaramate and 2-oxosuccinamate to biologically useful 2-oxoglutarate and oxaloacetate, respectively. This chain is Omega-amidase NIT3 (NIT3), found in Saccharomyces cerevisiae (strain ATCC 204508 / S288c) (Baker's yeast).